Consider the following 220-residue polypeptide: PRA1 family protein B4 (220 aa).

A disordered region spans residues 1–27 (MASSAPPVLPISNPQTVPSAAPSSVES). Positions 12 to 27 (SNPQTVPSAAPSSVES) are enriched in polar residues. 5 helical membrane passes run 83–103 (YSYFKVNYLTVATAIVGFSLV), 105–125 (HPFSLVFLLCLLASWLFLYLF), 146–166 (GCLILFSIFVIFLTDVGSVLV), 170–190 (MIGVALICAHGAFRAPEDLFL), and 196–216 (AATGFLSFLGGAASSAAPAVI).

It belongs to the PRA1 family. In terms of assembly, interacts with PRA1B1, PRA1B2, PRA1B3, PRA1B5, PRA1B6 and PRA1E. In terms of tissue distribution, expressed in roots, lateral roots, lateral root caps, stomata and trichomes.

The protein localises to the endosome membrane. In terms of biological role, may be involved in both secretory and endocytic intracellular trafficking in the endosomal/prevacuolar compartments. This is PRA1 family protein B4 (PRA1B4) from Arabidopsis thaliana (Mouse-ear cress).